The following is a 222-amino-acid chain: Sperm acrosome-associated protein 9 (222 aa).

A disordered region spans residues 164–222 (QHVSEPQAHQESTRGAARPAQAIGTQPRATKHKCRQLTKASLKPRGCSKPPWRPPGGKL).

As to quaternary structure, microtubule inner protein component of sperm flagellar doublet microtubules. Interacts with CABP1 and CALR. Interacts with INCA1. Interacts with microtubules.

It is found in the cytoplasm. The protein resides in the cytoplasmic vesicle. It localises to the secretory vesicle. The protein localises to the acrosome. Its subcellular location is the cytoskeleton. It is found in the cilium basal body. The protein resides in the flagellum axoneme. It localises to the cilium axoneme. The protein localises to the nucleus. Microtubule inner protein (MIP) part of the dynein-decorated doublet microtubules (DMTs) of multiciliated respiratory cells and the distal singlet microtubules of monoflagellated spermatozoa. Forms an extensive interaction network cross-linking the lumen of axonemal doublet microtubules. This chain is Sperm acrosome-associated protein 9, found in Homo sapiens (Human).